The chain runs to 340 residues: MLDPLKTSSYDYNLPKNQIATYPVTPADSAKLLIFNRSTNTIIHSTFKDILEFLPNDLSIFLNDTKVIKARIFGVKDSGGQIELLLNKPLFMDRYLVMIRGKVRVGTKLLFDENLSAIVEEVDEDGSRIVEFFQDEKKLDFLSLVEILNKIGHLPLPPYMNREDEKQDEQNYQTLFAKNYGAVAAPTASLHFTPELLKNLEEKYGLNYLTLHVGAGTFKPVDVEDILSHPMHSEYFEIGIDAKKNLDKANKVLAVGTTVTRTIEYYARTNKIQGECDLFLNPANKPIKVDYLLTNFHLPKSTLIMLVASFIGLEKTLEIYETAIKENYRFYSYGDGMLII.

Belongs to the QueA family. In terms of assembly, monomer.

The protein resides in the cytoplasm. The enzyme catalyses 7-aminomethyl-7-carbaguanosine(34) in tRNA + S-adenosyl-L-methionine = epoxyqueuosine(34) in tRNA + adenine + L-methionine + 2 H(+). The protein operates within tRNA modification; tRNA-queuosine biosynthesis. In terms of biological role, transfers and isomerizes the ribose moiety from AdoMet to the 7-aminomethyl group of 7-deazaguanine (preQ1-tRNA) to give epoxyqueuosine (oQ-tRNA). The chain is S-adenosylmethionine:tRNA ribosyltransferase-isomerase from Aliarcobacter butzleri (strain RM4018) (Arcobacter butzleri).